A 276-amino-acid chain; its full sequence is Large ribosomal subunit protein uL2c (276 aa).

The segment at 223 to 254 (VVKNPIDHPHGGGEGRSPIGRAKPVTPWGQPA) is disordered.

It belongs to the universal ribosomal protein uL2 family. In terms of assembly, part of the 50S ribosomal subunit.

It is found in the plastid. The protein localises to the chloroplast. In Emiliania huxleyi (Coccolithophore), this protein is Large ribosomal subunit protein uL2c (rpl2).